The sequence spans 116 residues: Spermadhesin Z13 (116 aa).

2 disulfides stabilise this stretch: cysteine 14–cysteine 35 and cysteine 58–cysteine 79. The CUB domain maps to 14–115 (CGDLYGEEYG…PDFFLIFRRV (102 aa)).

The protein belongs to the spermadhesin family. As to quaternary structure, homodimer; disulfide-linked. Seminal plasma.

It is found in the secreted. In terms of biological role, may be involved in the fertilization process. The sequence is that of Spermadhesin Z13 from Bos taurus (Bovine).